The following is a 534-amino-acid chain: Beta-glucosidase 32 (534 aa).

The signal sequence occupies residues 1–22; sequence MAIKLIALVITICVASWDSAQG. Position 51 (Gln51) interacts with a beta-D-glucoside. The N-linked (GlcNAc...) asparagine glycan is linked to Asn68. A beta-D-glucoside-binding positions include His154 and 199 to 200; that span reads NE. The active-site Proton donor is Glu200. A disulfide bond links Cys219 and Cys227. Tyr344 provides a ligand contact to a beta-D-glucoside. Asn374 carries an N-linked (GlcNAc...) asparagine glycan. Residue Glu417 coordinates a beta-D-glucoside. The active-site Nucleophile is the Glu417. Asn425 carries N-linked (GlcNAc...) asparagine glycosylation. Residues Trp467, 474–475, and Phe483 each bind a beta-D-glucoside; that span reads EW.

The protein belongs to the glycosyl hydrolase 1 family.

It catalyses the reaction Hydrolysis of terminal, non-reducing beta-D-glucosyl residues with release of beta-D-glucose.. The sequence is that of Beta-glucosidase 32 from Arabidopsis thaliana (Mouse-ear cress).